The following is a 310-amino-acid chain: Ornithine carbamoyltransferase (310 aa).

Carbamoyl phosphate is bound by residues 58 to 61 (STRT), Gln85, Arg109, and 136 to 139 (HPCQ). L-ornithine-binding positions include Asn167, Asp227, and 231–232 (SM). Residues 266–267 (CL) and Arg294 each bind carbamoyl phosphate.

This sequence belongs to the aspartate/ornithine carbamoyltransferase superfamily. OTCase family.

The protein localises to the cytoplasm. The enzyme catalyses carbamoyl phosphate + L-ornithine = L-citrulline + phosphate + H(+). It participates in amino-acid biosynthesis; L-arginine biosynthesis; L-arginine from L-ornithine and carbamoyl phosphate: step 1/3. Reversibly catalyzes the transfer of the carbamoyl group from carbamoyl phosphate (CP) to the N(epsilon) atom of ornithine (ORN) to produce L-citrulline. The protein is Ornithine carbamoyltransferase of Rhodopseudomonas palustris (strain ATCC BAA-98 / CGA009).